The primary structure comprises 734 residues: Photosystem I P700 chlorophyll a apoprotein A2 (734 aa).

Helical transmembrane passes span 46–69 (IFASHFGQLAIIFLWTSGNLFHVA), 135–158 (LYTGALFLLFLSAVSLIAGWLHLQ), 175–199 (LNHHLSGLFGVSSLAWTGHLVHVAI), 273–291 (IAHHHLAIALIFLVAGHMY), 330–353 (VHFQLGLALASLGVITSLVAQHMY), 369–395 (AALYTHHQYIAGFIMTGAFAHGAIFFI), 417–439 (AIISHLSWASLFLGFHTLGLYVH), and 517–535 (FLVHHAIALGLHTTTLILV). [4Fe-4S] cluster contacts are provided by C559 and C568. The next 2 helical transmembrane spans lie at 575–596 (AFYLAVFWMLNTIGWVTFYWHW) and 643–665 (LSVWAWMFLFGHLVWATGFMFLI). 3 residues coordinate chlorophyll a: H654, M662, and Y670. W671 is a phylloquinone binding site. The chain crosses the membrane as a helical span at residues 707 to 727 (LVGLAHFSVGYIFTYAAFLIA).

It belongs to the PsaA/PsaB family. The PsaA/B heterodimer binds the P700 chlorophyll special pair and subsequent electron acceptors. PSI consists of a core antenna complex that captures photons, and an electron transfer chain that converts photonic excitation into a charge separation. The eukaryotic PSI reaction center is composed of at least 11 subunits. P700 is a chlorophyll a/chlorophyll a' dimer, A0 is one or more chlorophyll a, A1 is one or both phylloquinones and FX is a shared 4Fe-4S iron-sulfur center. serves as cofactor.

It localises to the plastid. It is found in the chloroplast thylakoid membrane. It carries out the reaction reduced [plastocyanin] + hnu + oxidized [2Fe-2S]-[ferredoxin] = oxidized [plastocyanin] + reduced [2Fe-2S]-[ferredoxin]. In terms of biological role, psaA and PsaB bind P700, the primary electron donor of photosystem I (PSI), as well as the electron acceptors A0, A1 and FX. PSI is a plastocyanin-ferredoxin oxidoreductase, converting photonic excitation into a charge separation, which transfers an electron from the donor P700 chlorophyll pair to the spectroscopically characterized acceptors A0, A1, FX, FA and FB in turn. Oxidized P700 is reduced on the lumenal side of the thylakoid membrane by plastocyanin. In Platanus occidentalis (Sycamore), this protein is Photosystem I P700 chlorophyll a apoprotein A2.